The primary structure comprises 181 residues: Mitochondrial inner membrane protein Mpv17 (181 aa).

4 consecutive transmembrane segments (helical) span residues 20–37 (MCIAGTISGSGDCLAQYL), 51–67 (FSFLSSCFMAPSLFIWF), 86–103 (LCIDQLCFSPCFNAAILF), and 152–169 (VILNQVVAFFWNCYLSYI).

Belongs to the peroxisomal membrane protein PXMP2/4 family.

It is found in the mitochondrion inner membrane. In terms of biological role, involved in mitochondria homeostasis. This chain is Mitochondrial inner membrane protein Mpv17, found in Caenorhabditis elegans.